The primary structure comprises 177 residues: MNDIVKSAWASVKMNTDFICVDTYSGYRSNQLDPLGVQHLSSPDVSDLDLGEMVKDALSHSRFVLPAPRTDIWIHPEVTFDLDLYDSRRTVERYDEWVKKLMVHYGYKTKRALFKDMKSCDICCNHDAITISPTRHEKLEVWGGTGLKGSDNVILSVDSSPTEIGAGLRLALSRCKG.

As to quaternary structure, interacts with the C-terminal DNase fragment (residues 954-1077) of cognate toxin CdiA-YPIII.

Functionally, immunity protein component of a toxin-immunity protein module, which functions as a cellular contact-dependent growth inhibition (CDI) system. CDI modules allow bacteria to communicate with and inhibit the growth of closely related neighboring bacteria in a contact-dependent fashion. Neutralizes the toxic activity of cognate toxin CdiA-YPIII (residues 954-1077). Does not inhibit toxic activity of CdiA from other toxin-immunity modules. The polypeptide is Immunity protein CdiI-YPIII (Yersinia pseudotuberculosis serotype O:3 (strain YPIII)).